A 394-amino-acid chain; its full sequence is Potassium channel subfamily K member 18 (394 aa).

The Cytoplasmic segment spans residues 1-31; sequence MEAEEPPEARRCCPEALGKARGCCPEALGKL. Residues 32-52 form a helical membrane-spanning segment; the sequence is LPGLCFLCCLVTYALVGAALF. Residue Asn-83 is glycosylated (N-linked (GlcNAc...) asparagine). An intramembrane region (pore-forming) is located at residues 114-140; it reads FLSALFFCCTVFSTVGYGHMYPVTRLG. Positions 127, 128, 129, and 130 each coordinate K(+). The interval 127 to 132 is selectivity filter 1; it reads TVGYGH. A helical membrane pass occupies residues 142–162; sequence FLCMLYALFGIPLMFLVLTDI. Topologically, residues 163–292 are cytoplasmic; the sequence is GDILATILSR…EVGQQVERLD (130 aa). Residues 210 to 215 are interaction with calcineurin; that stretch reads PQIVID. Residues 261–266 form an interaction with YWHAH region; that stretch reads RSNSCP. Residues Ser-264 and Ser-276 each carry the phosphoserine modification. A helical transmembrane segment spans residues 293 to 313; that stretch reads IPLPVIALVVFAYISCAAAIL. An intramembrane region (pore-forming) is located at residues 326-340; that stretch reads FYFCFVTLTTIGFGD. A selectivity filter 2 region spans residues 335-340; the sequence is TIGFGD. A helical membrane pass occupies residues 347–367; sequence HFFLFFSIYIIVGMEILFIAF. Residues 368–394 lie on the Cytoplasmic side of the membrane; that stretch reads KLMQNRLLHTYKTLMLFVCQREVSLPW.

It belongs to the two pore domain potassium channel (TC 1.A.1.8) family. As to quaternary structure, homodimer. Heterodimer with KCNK2. Heterodimer with KCNK10. Interacts with calcineurin. Interacts with YWHAH, in a phosphorylation-dependent manner. Phosphorylation of Ser-264 is required for the binding of 14-3-3eta/YWHAH. Calcineurin-mediated dephosphorylation of Ser-276 enhances channel activity. In terms of processing, N-glycosylated. In terms of tissue distribution, detected in brain cortex, cerebellum, dorsal root ganglion, spinal cord and testis. High expression in trigeminal ganglion (at protein level), also expressed in autonomic nervous system ganglia such as the stellate ganglion and paravertebral sympathetic ganglia. Expressed in all adult spinal cord and brain regions, with slightly higher expression in thalamus, hypothalamus, hippocampus and posterior corte (at protein level). In non-neuronal tissues, substantial expression found in lung and heart and weal expression in liver, testis, kidney, small intestine and spleen. Expressed in regulatory T cells (at protein level).

It localises to the cell membrane. It catalyses the reaction K(+)(in) = K(+)(out). With respect to regulation, activated upon cell stimulation via Ca(2+)-mobilizing receptors, such as CHRM1/M1 muscarinic receptor and AGTR1/AT1a angiotensin receptor. Activated by volatile anesthetics, such as isoflurane and inhibited by local anesthetics such as bupivacaine and lidocaine. Inhibited by extracellular acidic pH. Inhibited by Zn(2+) ions. Inhibited by hydroxy-alpha-sanshool, an ingredient of Schezuan pepper. Inhibited by Ba(2+) ions. Its function is as follows. K(+) channel that conducts outward and inward rectifying currents at depolarized and hyperpolarized membrane potentials, respectively. The outward rectifying currents are voltage-dependent, coupled to K(+) electrochemical gradient across the membrane, whereas the inward currents can be induced in response to activation of Ca(2+)-mobilizing receptors. Homo- and heterodimerizes to form functional channels with distinct regulatory and gating properties. In trigeminal ganglia sensory neurons, the heterodimers of KCNK18/TRESK and KCNK2/TREK-1 or KCNK10/TREK-2 inhibit neuronal firing and neurogenic inflammation by stabilizing the resting membrane potential at K(+) equilibrium potential as well as by regulating the threshold of action potentials and the spike frequency. In thymocytes, conducts K(+) currents upon T cell receptor (TCR) signaling leading to sustained Ca(2+) influx and NF-kappa-B activation, FOXP3 transcription and positive selection of regulatory T cell (Treg) progenitor subsets. Appears to mediate the analgesics effects of hydroxy-alpha-sanshool, a metabolite naturally present in Schezuan pepper and other Xanthoxylum plants. The protein is Potassium channel subfamily K member 18 of Mus musculus (Mouse).